The sequence spans 1357 residues: DNA-directed RNA polymerase subunit beta (1357 aa).

This sequence belongs to the RNA polymerase beta chain family. As to quaternary structure, the RNAP catalytic core consists of 2 alpha, 1 beta, 1 beta' and 1 omega subunit. When a sigma factor is associated with the core the holoenzyme is formed, which can initiate transcription.

The catalysed reaction is RNA(n) + a ribonucleoside 5'-triphosphate = RNA(n+1) + diphosphate. Its function is as follows. DNA-dependent RNA polymerase catalyzes the transcription of DNA into RNA using the four ribonucleoside triphosphates as substrates. The protein is DNA-directed RNA polymerase subunit beta of Pseudomonas putida (strain W619).